The following is a 213-amino-acid chain: uncharacterized protein (213 aa).

S-adenosyl-L-methionine is bound by residues glycine 53, glutamate 74, and aspartate 97.

This sequence belongs to the methyltransferase superfamily. YrrT family.

Functionally, could be a S-adenosyl-L-methionine-dependent methyltransferase. This is an uncharacterized protein from Geobacillus sp. (strain WCH70).